The following is a 549-amino-acid chain: MLNQKLNPTPSEDLTIDVDLLYETDPCELKLDEMIEAEPEPEMIEGLPASDALTPADRYLELFEHVQSTKLFPDSKTFPDCAPKMDPLDILIRYRKVRRHRDFDLRRFVENHFWLPETLSSEYVSNPENSLKEHIDQLWPILTREPQDHIPWSSLLALPQSYIVPGGRFSETYYWDSYFTMLGLAESGREDLLKCMADNFAWMIENYGHIPNGNRTYYLSRSQPPVFALMVELFEEDGVRGARRYLDHLKMEYAFWMDGAESLALNQAYRHVVRMPDGSLLNRYWDDRDTPRDESWLEDVETAKHSGRPPNEVYRDLRAGAASGWDYSSRWLRDAGRLASIRTTQFIPIDLNAFLYKLESAIANISALKGERDTEALFRQKASDRRAAVNHYLWDDENGCYRDYDWRREEMALFSAASIVPLYVGMANHEQADRLANVVRSRLLTPGGIMATEYETGEQWDKPNGWAPLQWMAIQGFKRYGDDMLGDEIAHNWLKTVNHFYQEHHKLIEKYHISGGTPREGGGGEYPLQDGFGWTNGVVRRLIGLYGEP.

Substrate-binding positions include Arg168, 175–176, Asn212, 221–223, 292–294, and Gly324; these read WD, RSQ, and RDE. Active-site proton donor/acceptor residues include Asp326 and Glu509. Substrate is bound at residue Glu525.

It belongs to the glycosyl hydrolase 37 family. Monomer.

The protein localises to the cytoplasm. It catalyses the reaction alpha,alpha-trehalose + H2O = alpha-D-glucose + beta-D-glucose. The protein operates within glycan degradation; trehalose degradation; D-glucose from alpha,alpha-trehalose: step 1/1. Functionally, hydrolyzes trehalose to glucose. Could be involved, in cells returning to low osmolarity conditions, in the utilization of the accumulated cytoplasmic trehalose, which was synthesized in response to high osmolarity. This is Cytoplasmic trehalase from Salmonella choleraesuis (strain SC-B67).